Here is a 163-residue protein sequence, read N- to C-terminus: F-box protein At2g35280 (163 aa).

Residues 8 to 57 enclose the F-box domain; sequence ISRLEALPQDLLREIVAKIGVKSAEDYHNCILSCKELGASANDERVLKTL.

In Arabidopsis thaliana (Mouse-ear cress), this protein is F-box protein At2g35280.